The chain runs to 96 residues: uncharacterized protein (96 aa).

Residues Met-1 to Arg-18 are compositionally biased toward basic and acidic residues. The disordered stretch occupies residues Met-1–Gln-96. The segment covering Gln-28–Thr-46 has biased composition (polar residues). Residues Thr-70–Gln-96 are compositionally biased toward basic and acidic residues.

This is an uncharacterized protein from Caenorhabditis elegans.